We begin with the raw amino-acid sequence, 273 residues long: Large ribosomal subunit protein uL2 (273 aa).

The segment at 228–273 (IDHPHGGGEGKTSGGRHPVTPWGFSTKGKKTRKNKRTSKFIVKKRK) is disordered. Positions 254–273 (KGKKTRKNKRTSKFIVKKRK) are enriched in basic residues.

Belongs to the universal ribosomal protein uL2 family. Part of the 50S ribosomal subunit. Forms a bridge to the 30S subunit in the 70S ribosome.

Its function is as follows. One of the primary rRNA binding proteins. Required for association of the 30S and 50S subunits to form the 70S ribosome, for tRNA binding and peptide bond formation. It has been suggested to have peptidyltransferase activity; this is somewhat controversial. Makes several contacts with the 16S rRNA in the 70S ribosome. This is Large ribosomal subunit protein uL2 from Rickettsia typhi (strain ATCC VR-144 / Wilmington).